Reading from the N-terminus, the 185-residue chain is Elongation factor P (185 aa).

It belongs to the elongation factor P family.

Its subcellular location is the cytoplasm. It functions in the pathway protein biosynthesis; polypeptide chain elongation. In terms of biological role, involved in peptide bond synthesis. Stimulates efficient translation and peptide-bond synthesis on native or reconstituted 70S ribosomes in vitro. Probably functions indirectly by altering the affinity of the ribosome for aminoacyl-tRNA, thus increasing their reactivity as acceptors for peptidyl transferase. In Paraburkholderia phytofirmans (strain DSM 17436 / LMG 22146 / PsJN) (Burkholderia phytofirmans), this protein is Elongation factor P.